A 684-amino-acid chain; its full sequence is Glycine--tRNA ligase beta subunit (684 aa).

Belongs to the class-II aminoacyl-tRNA synthetase family. As to quaternary structure, tetramer of two alpha and two beta subunits.

It is found in the cytoplasm. It carries out the reaction tRNA(Gly) + glycine + ATP = glycyl-tRNA(Gly) + AMP + diphosphate. The chain is Glycine--tRNA ligase beta subunit from Pseudomonas savastanoi pv. phaseolicola (strain 1448A / Race 6) (Pseudomonas syringae pv. phaseolicola (strain 1448A / Race 6)).